The following is a 127-amino-acid chain: Glycine cleavage system H protein (127 aa).

In terms of domain architecture, Lipoyl-binding spans 24 to 105 (TLTIGITDLA…AYDAWLFKIK (82 aa)). Position 65 is an N6-lipoyllysine (Lys-65).

This sequence belongs to the GcvH family. The glycine cleavage system is composed of four proteins: P, T, L and H. (R)-lipoate is required as a cofactor.

Functionally, the glycine cleavage system catalyzes the degradation of glycine. The H protein shuttles the methylamine group of glycine from the P protein to the T protein. In Ralstonia nicotianae (strain ATCC BAA-1114 / GMI1000) (Ralstonia solanacearum), this protein is Glycine cleavage system H protein.